The chain runs to 219 residues: 2-hydroxy-3-keto-5-methylthiopentenyl-1-phosphate phosphatase (219 aa).

Belongs to the HAD-like hydrolase superfamily. MtnX family.

It carries out the reaction 2-hydroxy-5-methylsulfanyl-3-oxopent-1-enyl phosphate + H2O = 1,2-dihydroxy-5-(methylsulfanyl)pent-1-en-3-one + phosphate. It functions in the pathway amino-acid biosynthesis; L-methionine biosynthesis via salvage pathway; L-methionine from S-methyl-5-thio-alpha-D-ribose 1-phosphate: step 4/6. Dephosphorylates 2-hydroxy-3-keto-5-methylthiopentenyl-1-phosphate (HK-MTPenyl-1-P) yielding 1,2-dihydroxy-3-keto-5-methylthiopentene (DHK-MTPene). This chain is 2-hydroxy-3-keto-5-methylthiopentenyl-1-phosphate phosphatase, found in Bacillus cereus (strain ZK / E33L).